The following is a 578-amino-acid chain: Arginine--tRNA ligase (578 aa).

Residues 127–137 carry the 'HIGH' region motif; the sequence is PNLAKEMHVGH.

Belongs to the class-I aminoacyl-tRNA synthetase family. Monomer.

The protein localises to the cytoplasm. The enzyme catalyses tRNA(Arg) + L-arginine + ATP = L-arginyl-tRNA(Arg) + AMP + diphosphate. The chain is Arginine--tRNA ligase from Pseudomonas fluorescens (strain ATCC BAA-477 / NRRL B-23932 / Pf-5).